The sequence spans 710 residues: Polyribonucleotide nucleotidyltransferase (710 aa).

Mg(2+)-binding residues include D489 and D495. The KH domain maps to P556 to I615. The S1 motif domain maps to G625–K693. The interval S691 to D710 is disordered. The span at P700 to D710 shows a compositional bias: basic and acidic residues.

Belongs to the polyribonucleotide nucleotidyltransferase family. Requires Mg(2+) as cofactor.

The protein resides in the cytoplasm. The catalysed reaction is RNA(n+1) + phosphate = RNA(n) + a ribonucleoside 5'-diphosphate. In terms of biological role, involved in mRNA degradation. Catalyzes the phosphorolysis of single-stranded polyribonucleotides processively in the 3'- to 5'-direction. The polypeptide is Polyribonucleotide nucleotidyltransferase (Streptococcus pyogenes serotype M4 (strain MGAS10750)).